Consider the following 116-residue polypeptide: Protein Wnt-5a (116 aa).

Ser-1 is lipidated: O-palmitoleoyl serine; by PORCN. N-linked (GlcNAc...) asparagine glycosylation is found at Asn-69 and Asn-83. Cys-82 and Cys-97 are joined by a disulfide.

The protein belongs to the Wnt family. Post-translationally, palmitoleoylation is required for efficient binding to frizzled receptors. Depalmitoleoylation leads to Wnt signaling pathway inhibition.

It is found in the secreted. It localises to the extracellular space. The protein localises to the extracellular matrix. Functionally, ligand for members of the frizzled family of seven transmembrane receptors. Can activate or inhibit canonical Wnt signaling, depending on receptor context. Required during embryogenesis for extension of the primary anterior-posterior axis. In Meleagris gallopavo (Wild turkey), this protein is Protein Wnt-5a (WNT5A).